Here is a 276-residue protein sequence, read N- to C-terminus: MKIEKAKQLTARKFKRMSGVSRQTFNYMVDVVKADEKKKKKPGRRPKLIIEDQVLMVIQYWREYRTYYHIGLDWGLSESAVCRTVYKIENILISSRKFSLPGKKELLKMPSQENLVVMDVTESPIERPKKSQKKFFSGKAGEHTLKTQLVIHQKTSQIICLGHGKGRIHDFRLFKTSGVKFSELLKVIADKGYQGITKIHKLSETPIKKPKGKKLAKEQKEYNRELNRLRIVVEHVNRRLKIFNILSNQYRNRHRRFGLRSNLIAGIYNYELALKA.

The region spanning 118–256 (MDVTESPIER…SNQYRNRHRR (139 aa)) is the DDE Tnp4 domain. A divalent metal cation-binding residues include Asp-119, Asp-170, Asp-190, and Glu-234.

It belongs to the transposase 11 family. The cofactor is a divalent metal cation.

In terms of biological role, involved in the transposition of the insertion sequence. In Microchaete diplosiphon (Fremyella diplosiphon), this protein is Probable transposase for insertion sequence element IS702.